A 91-amino-acid polypeptide reads, in one-letter code: Elongation factor 1-beta (91 aa).

Belongs to the EF-1-beta/EF-1-delta family.

Functionally, promotes the exchange of GDP for GTP in EF-1-alpha/GDP, thus allowing the regeneration of EF-1-alpha/GTP that could then be used to form the ternary complex EF-1-alpha/GTP/AAtRNA. This chain is Elongation factor 1-beta, found in Pyrococcus furiosus (strain ATCC 43587 / DSM 3638 / JCM 8422 / Vc1).